We begin with the raw amino-acid sequence, 527 residues long: Serine/threonine-protein kinase CHK1 (527 aa).

A Protein kinase domain is found at 15-281; sequence VVLGDTVGQG…LKALKLHPWV (267 aa). ATP-binding positions include 21-29 and lysine 45; that span reads VGQGAFACV. Aspartate 142 functions as the Proton acceptor in the catalytic mechanism.

Belongs to the protein kinase superfamily. CAMK Ser/Thr protein kinase family. NIM1 subfamily.

The protein localises to the nucleus. It catalyses the reaction L-seryl-[protein] + ATP = O-phospho-L-seryl-[protein] + ADP + H(+). The enzyme catalyses L-threonyl-[protein] + ATP = O-phospho-L-threonyl-[protein] + ADP + H(+). Serine/threonine-protein kinase which is required for checkpoint-mediated cell cycle arrest and activation of DNA repair in response to the presence of DNA damage or unreplicated DNA. May also negatively regulate cell cycle progression during unperturbed cell cycles. Controls phosphorylation and abundance of PDS1 to prevent anaphase entry. Also helps prevent mitotic exit. This chain is Serine/threonine-protein kinase CHK1 (CHK1), found in Saccharomyces cerevisiae (strain ATCC 204508 / S288c) (Baker's yeast).